The primary structure comprises 369 residues: Maltose/maltodextrin import ATP-binding protein MalK (369 aa).

In terms of domain architecture, ABC transporter spans 4-234 (VTLRNVCKSY…PKNRFVAGFI (231 aa)). 36–43 (GPSGCGKS) serves as a coordination point for ATP.

Belongs to the ABC transporter superfamily. Maltooligosaccharide importer (TC 3.A.1.1.1) family. As to quaternary structure, the complex is composed of two ATP-binding proteins (MalK), two transmembrane proteins (MalG and MalK) and a solute-binding protein (MalE).

The protein localises to the cell inner membrane. It carries out the reaction D-maltose(out) + ATP + H2O = D-maltose(in) + ADP + phosphate + H(+). In terms of biological role, part of the ABC transporter complex MalEFGK involved in maltose/maltodextrin import. Responsible for energy coupling to the transport system. The protein is Maltose/maltodextrin import ATP-binding protein MalK of Aliivibrio fischeri (strain ATCC 700601 / ES114) (Vibrio fischeri).